Reading from the N-terminus, the 591-residue chain is Monoterpene synthase 8, chloroplastic (591 aa).

A chloroplast-targeting transit peptide spans 1 to 46; sequence MSLLLAPPSYFPFRGLRRSTAAKQPPCLRLVKCTADRQSPEAARRS. The Mg(2+) site is built by aspartate 346, aspartate 350, and glutamate 497. Positions 346-350 match the DDXXD motif motif; it reads DDVYD.

This sequence belongs to the terpene synthase family. Tpsa subfamily. The cofactor is Mg(2+). Requires Mn(2+) as cofactor. Highly expressed in flowers, petals and sepals, but almost undetectable in vegetative organs.

Its subcellular location is the plastid. It localises to the chloroplast. It catalyses the reaction (2E)-geranyl diphosphate + H2O = (R)-linalool + diphosphate. The enzyme catalyses (2E)-geranyl diphosphate + H2O = (S)-linalool + diphosphate. It carries out the reaction (2E,6E)-farnesyl diphosphate = (S)-beta-bisabolene + diphosphate. The catalysed reaction is (2E,6E)-farnesyl diphosphate = (E,R)-alpha-bisabolene + diphosphate. It catalyses the reaction (2E,6E)-farnesyl diphosphate = (E)-beta-farnesene + diphosphate. The enzyme catalyses (2E,6E)-farnesyl diphosphate = beta-sesquiphellandrene + diphosphate. It carries out the reaction (2E,6E)-farnesyl diphosphate = (1S,5S,6R)-alpha-bergamotene + diphosphate. Its pathway is secondary metabolite biosynthesis; terpenoid biosynthesis. Sesquiterpene and monoterpene synthase involved in the biosynthesis of volatile compounds present in floral scent. Mediates the conversion of (2E)-geranyl diphosphate (GPP) into linalool, with trace levels of myrcene, limonene and (Z)-beta-ocimene. Also acts as a sesquiterpene synthase by catalyzing the conversion of farnesyl diphosphate (FPP) to alpha-bergamotene and beta-bisabolene and to minor products including alpha-curcumene, cis-alpha-bisabolene, beta-farnesene and beta-sesquiphellandrene, as well as seven other unidentified sesquiterpenes. The sequence is that of Monoterpene synthase 8, chloroplastic from Hedychium coronarium (White butterfly ginger-lily).